Consider the following 335-residue polypeptide: NADH-quinone oxidoreductase subunit H (335 aa).

Transmembrane regions (helical) follow at residues 15 to 35 (VVKAIVVLLAVVVCGALLSFV), 81 to 101 (MIFTLAPVVAMSALLIGFSII), 114 to 134 (IGLLFFFAMAGLSVYAVLFAG), 154 to 174 (VSYEVFLGLALMGVVVQVGSF), 187 to 207 (LWFIIPQFFGFCTFFIAGVAV), 238 to 258 (FFVGEYIGIILISALLVTLFF), 270 to 290 (QVPFLWFALKTAFFIMLFILL), and 307 to 327 (WKFCLPLTLINLLVTAAIVLY).

This sequence belongs to the complex I subunit 1 family. In terms of assembly, NDH-1 is composed of 13 different subunits. Subunits NuoA, H, J, K, L, M, N constitute the membrane sector of the complex.

The protein localises to the cell inner membrane. The enzyme catalyses a quinone + NADH + 5 H(+)(in) = a quinol + NAD(+) + 4 H(+)(out). In terms of biological role, NDH-1 shuttles electrons from NADH, via FMN and iron-sulfur (Fe-S) centers, to quinones in the respiratory chain. The immediate electron acceptor for the enzyme in this species is believed to be ubiquinone. Couples the redox reaction to proton translocation (for every two electrons transferred, four hydrogen ions are translocated across the cytoplasmic membrane), and thus conserves the redox energy in a proton gradient. This subunit may bind ubiquinone. The sequence is that of NADH-quinone oxidoreductase subunit H from Pseudomonas putida (strain GB-1).